The following is a 486-amino-acid chain: MIINLQELIALLPFLILLLTVVIVILSISYNRNHFFIAFLTIISLIVSLCSLYFLIAIVPIDITSLFHITKRSILYISMIIISSIATCVFAYPWLLKYAFNKEEFYLLTLISTLGAIFLTISNHMASLFISVELMSLPIFGLIAYSNSQKYSLEASFKYLVLSGVSSSFLLLGISWIYAISGNLSLLCLNQIFSDLSNSEKMMVLFGIIMVLMSFFFKLSMVPFHLWTADIYQGTPASVLSFFSVSGKIAIFSILLYFFSYFSVFDNKVIFLILSLISFFSILFGNLMAIFQTNIKRFFGYSSISQIGYLLIILLVSKDEYFFSVQTGGIFLLNYLCTNIVYFGVINLFSNSCDYDIDSIHLYKGLFWVQPLLASIVTIVLLSLGGIPITLGFFGKFCIFSIIIKNHLWTIGASFLIGTILGLYGYLRLIVNMYLNPSEQSFINDIKKSNFWLCSPSGILIFISGIMLLILGIYPNPLINLINSVQ.

The next 14 membrane-spanning stretches (helical) occupy residues 8 to 28 (LIAL…ILSI), 36 to 56 (FIAF…YFLI), 74 to 94 (ILYI…AYPW), 104 to 124 (EFYL…ISNH), 125 to 145 (MASL…LIAY), 160 to 180 (LVLS…IYAI), 204 to 224 (VLFG…MVPF), 239 to 259 (VLSF…LYFF), 270 to 290 (IFLI…LMAI), 298 to 318 (FFGY…LVSK), 329 to 349 (GIFL…INLF), 374 to 394 (ASIV…LGFF), 407 to 427 (HLWT…YGYL), and 459 to 479 (ILIF…NPLI).

This sequence belongs to the complex I subunit 2 family. In terms of assembly, NDH-1 is composed of 13 different subunits. Subunits NuoA, H, J, K, L, M, N constitute the membrane sector of the complex.

The protein resides in the cell membrane. The catalysed reaction is a quinone + NADH + 5 H(+)(in) = a quinol + NAD(+) + 4 H(+)(out). Functionally, NDH-1 shuttles electrons from NADH, via FMN and iron-sulfur (Fe-S) centers, to quinones in the respiratory chain. The immediate electron acceptor for the enzyme in this species is believed to be ubiquinone. Couples the redox reaction to proton translocation (for every two electrons transferred, four hydrogen ions are translocated across the cytoplasmic membrane), and thus conserves the redox energy in a proton gradient. This is NADH-quinone oxidoreductase subunit N from Buchnera aphidicola subsp. Schizaphis graminum (strain Sg).